Reading from the N-terminus, the 223-residue chain is UPF0441 protein YgiB (223 aa).

Over residues Thr-178 to Thr-195 the composition is skewed to low complexity. Positions Thr-178–Gly-223 are disordered. Polar residues predominate over residues Ala-204–Gly-223.

Belongs to the UPF0441 family.

The sequence is that of UPF0441 protein YgiB from Salmonella paratyphi B (strain ATCC BAA-1250 / SPB7).